The sequence spans 180 residues: UPF0149 protein XC_0904 (180 aa).

Belongs to the UPF0149 family.

This chain is UPF0149 protein XC_0904, found in Xanthomonas campestris pv. campestris (strain 8004).